The primary structure comprises 707 residues: Ribosome biogenesis protein ENP2 (707 aa).

5 WD repeats span residues 54–94 (EFSE…LKFD), 178–217 (LDTE…RVSK), 226–265 (NRPF…PSII), 269–310 (GYGF…AYAS), and 312–351 (EPSV…PSPR). Positions 523-707 (LTAAEESDEE…RASKNAFRGM (185 aa)) are disordered. Phosphoserine is present on serine 529. Basic and acidic residues predominate over residues 532–544 (ERIAMKDGRGHYD). Acidic residues predominate over residues 545–558 (YEDEESDEEESDDE). A phosphoserine mark is found at serine 550 and serine 555. Basic and acidic residues-rich tracts occupy residues 559-598 (TNQK…RFMN), 629-647 (ENGK…RGEA), 659-671 (KDGN…HDNS), and 680-697 (NGNK…ENRR).

This sequence belongs to the WD repeat NOL10/ENP2 family. In terms of assembly, component of the 90S pre-ribosomes.

The protein localises to the nucleus. Its subcellular location is the nucleolus. In terms of biological role, may be involved in rRNA-processing and ribosome biosynthesis. The protein is Ribosome biogenesis protein ENP2 (ENP2) of Saccharomyces cerevisiae (strain ATCC 204508 / S288c) (Baker's yeast).